The sequence spans 436 residues: Indole-3-acetyl-aspartic acid hydrolase (436 aa).

The protein belongs to the peptidase M20 family. As to quaternary structure, monomer.

It catalyses the reaction (indol-3-yl)acetyl-L-aspartate + H2O = (indol-3-yl)acetate + L-aspartate. Its function is as follows. Hydrolyzes indole-3-acetyl-aspartate (IAA-Asp) to indole-3-acetic acid (IAA). Shows an exclusively high substrate specificity for IAA-Asp. This chain is Indole-3-acetyl-aspartic acid hydrolase, found in Enterobacter agglomerans (Erwinia herbicola).